The following is a 312-amino-acid chain: Dihydroorotate dehydrogenase B (NAD(+)), catalytic subunit (312 aa).

FMN contacts are provided by residues Ser-21 and Lys-45–Ala-46. Residues Lys-45 and Asn-69–Leu-73 contribute to the substrate site. Residues Asn-99 and Asn-127 each contribute to the FMN site. A substrate-binding site is contributed by Asn-127. Cys-130 (nucleophile) is an active-site residue. Positions 165 and 191 each coordinate FMN. Asn-192–Thr-193 provides a ligand contact to substrate. FMN-binding positions include Gly-217, Gly-243–Gly-244, and Gly-265–Thr-266.

It belongs to the dihydroorotate dehydrogenase family. Type 1 subfamily. As to quaternary structure, heterotetramer of 2 PyrK and 2 PyrD type B subunits. FMN is required as a cofactor.

The protein resides in the cytoplasm. The catalysed reaction is (S)-dihydroorotate + NAD(+) = orotate + NADH + H(+). It functions in the pathway pyrimidine metabolism; UMP biosynthesis via de novo pathway; orotate from (S)-dihydroorotate (NAD(+) route): step 1/1. Its function is as follows. Catalyzes the conversion of dihydroorotate to orotate with NAD(+) as electron acceptor. This chain is Dihydroorotate dehydrogenase B (NAD(+)), catalytic subunit (pyrD), found in Anoxybacillus flavithermus (strain DSM 21510 / WK1).